Consider the following 261-residue polypeptide: Indole-3-glycerol phosphate synthase (261 aa).

This sequence belongs to the TrpC family.

It catalyses the reaction 1-(2-carboxyphenylamino)-1-deoxy-D-ribulose 5-phosphate + H(+) = (1S,2R)-1-C-(indol-3-yl)glycerol 3-phosphate + CO2 + H2O. Its pathway is amino-acid biosynthesis; L-tryptophan biosynthesis; L-tryptophan from chorismate: step 4/5. This chain is Indole-3-glycerol phosphate synthase, found in Paraburkholderia phymatum (strain DSM 17167 / CIP 108236 / LMG 21445 / STM815) (Burkholderia phymatum).